Consider the following 172-residue polypeptide: NADH-ubiquinone oxidoreductase chain 6 (172 aa).

The next 5 membrane-spanning stretches (helical) occupy residues 1–21 (MTYFVLFLGLCFVLGGLAVAS), 27–47 (YGVVGLVLASVAGCAWLLSLG), 48–68 (VSFVSLVLFMVYLGGMLVVFV), 87–107 (VVGYGMGFVAVLVMGMVVGGF), and 138–158 (CGVGMFLVAGWGLLLTLFVVL).

The protein belongs to the complex I subunit 6 family.

It localises to the mitochondrion membrane. The enzyme catalyses a ubiquinone + NADH + 5 H(+)(in) = a ubiquinol + NAD(+) + 4 H(+)(out). Functionally, core subunit of the mitochondrial membrane respiratory chain NADH dehydrogenase (Complex I) that is believed to belong to the minimal assembly required for catalysis. Complex I functions in the transfer of electrons from NADH to the respiratory chain. The immediate electron acceptor for the enzyme is believed to be ubiquinone. The sequence is that of NADH-ubiquinone oxidoreductase chain 6 (MT-ND6) from Uria lomvia (Thick-billed murre).